Here is a 272-residue protein sequence, read N- to C-terminus: Short-chain dehydrogenase srdC (272 aa).

Residues Ile-15, Asp-65, Arg-127, Tyr-173, Lys-177, Val-206, and Thr-208 each contribute to the NADP(+) site. The Proton donor role is filled by Tyr-173. Residue Lys-177 is the Lowers pKa of active site Tyr of the active site.

It belongs to the short-chain dehydrogenases/reductases (SDR) family.

Functionally, short-chain dehydrogenase; part of the gene cluster that mediates the biosynthesis of sordarial, a salicylic aldehyde structurally related to the phytotoxin pyriculol. The most interesting aspect of this pathway is formation of an aromatic product from the highly reducing polyketide synthase srdA. SrdA synthesizes a reduced polyketide chain from one molecule of acetyl-CoA and five molecules of malonyl-CoA. The polyketide chain is then reductively released as an aldehyde. The oxidoreductases srdC, srdD and srdE then oxidize one of the hydroxy groups to facilitate the intramolecular aldol condensation, followed by dehydration to yield a salicylic aldehyde. This aldehyde can undergo facile reduction by endogenous reductases to yield the alcohol 1-hydroxy-2-hydroxymethyl-3-pent-1,3-dienylbenzene. The flavin-dependent srdI counteract against the propensity of the aldehydes to be reduced under physiological conditions and is responsible for reoxidizing 1-hydroxy-2-hydroxymethyl-3-pent-1,3-dienylbenzene back to the salicylic aldehyde. This salicylic aldehyde is then selectively epoxidized by the cupin-domain-containing oxidoreductase srdB to yield the epoxide, which can be hydrolyzed stereoselectively by the hydrolase srdG to give the final product sordarial. This is Short-chain dehydrogenase srdC from Neurospora crassa (strain ATCC 24698 / 74-OR23-1A / CBS 708.71 / DSM 1257 / FGSC 987).